The primary structure comprises 72 residues: Translation initiation factor IF-1 (72 aa).

The 72-residue stretch at 1-72 folds into the S1-like domain; sequence MSKEENIEMQ…TKGRIIFRSR (72 aa).

This sequence belongs to the IF-1 family. As to quaternary structure, component of the 30S ribosomal translation pre-initiation complex which assembles on the 30S ribosome in the order IF-2 and IF-3, IF-1 and N-formylmethionyl-tRNA(fMet); mRNA recruitment can occur at any time during PIC assembly.

It is found in the cytoplasm. Its function is as follows. One of the essential components for the initiation of protein synthesis. Stabilizes the binding of IF-2 and IF-3 on the 30S subunit to which N-formylmethionyl-tRNA(fMet) subsequently binds. Helps modulate mRNA selection, yielding the 30S pre-initiation complex (PIC). Upon addition of the 50S ribosomal subunit IF-1, IF-2 and IF-3 are released leaving the mature 70S translation initiation complex. This is Translation initiation factor IF-1 from Buchnera aphidicola subsp. Acyrthosiphon pisum (strain APS) (Acyrthosiphon pisum symbiotic bacterium).